A 146-amino-acid polypeptide reads, in one-letter code: 3-dehydroquinate dehydratase (146 aa).

The Proton acceptor role is filled by tyrosine 23. The substrate site is built by asparagine 75, histidine 81, and aspartate 88. Histidine 101 (proton donor) is an active-site residue. Residues 102–103 (LS) and arginine 112 each bind substrate.

This sequence belongs to the type-II 3-dehydroquinase family. Homododecamer.

The enzyme catalyses 3-dehydroquinate = 3-dehydroshikimate + H2O. Its pathway is metabolic intermediate biosynthesis; chorismate biosynthesis; chorismate from D-erythrose 4-phosphate and phosphoenolpyruvate: step 3/7. In terms of biological role, catalyzes a trans-dehydration via an enolate intermediate. This is 3-dehydroquinate dehydratase from Saccharophagus degradans (strain 2-40 / ATCC 43961 / DSM 17024).